A 485-amino-acid chain; its full sequence is NADH-quinone oxidoreductase subunit N (485 aa).

The next 14 membrane-spanning stretches (helical) occupy residues 8 to 28 (LIALLPLLIVGLTVVVVMLGI), 35 to 55 (FINATLTVIGLNLALLSLYFV), 78 to 98 (GLVILASLATCTFAYPWLVGY), 104 to 124 (EFYLLVLIATLGGILLASANH), 125 to 145 (LASLFLGIELISLPLFGLVGY), 159 to 179 (YMLLSAAASSFLLFGMALLYA), 203 to 223 (VLAGMGMMIVGLGFKLSLVPF), 235 to 255 (PAPVSTFLATASKIAIFAVVM), 271 to 291 (MVLSIIAVCSILFGNLMAISQ), 297 to 317 (LLGYSSIAHLGYLLVALIAVQ), 327 to 347 (GVYLAGYLFSSLGAFGVVSLM), 374 to 394 (AVMTVMMLSLAGIPMTLGFIG), 408 to 427 (WWLTGAVVLGSAIGLYYYLR), and 449 to 469 (ALTAGGVVVLISAALVLLLGV).

This sequence belongs to the complex I subunit 2 family. NDH-1 is composed of 13 different subunits. Subunits NuoA, H, J, K, L, M, N constitute the membrane sector of the complex.

Its subcellular location is the cell inner membrane. It carries out the reaction a quinone + NADH + 5 H(+)(in) = a quinol + NAD(+) + 4 H(+)(out). Its function is as follows. NDH-1 shuttles electrons from NADH, via FMN and iron-sulfur (Fe-S) centers, to quinones in the respiratory chain. The immediate electron acceptor for the enzyme in this species is believed to be ubiquinone. Couples the redox reaction to proton translocation (for every two electrons transferred, four hydrogen ions are translocated across the cytoplasmic membrane), and thus conserves the redox energy in a proton gradient. The sequence is that of NADH-quinone oxidoreductase subunit N from Serratia proteamaculans (strain 568).